The sequence spans 1988 residues: Protein Ycf2 (1988 aa).

Residue 1337–1344 (GSIGTGRS) coordinates ATP. The segment at 1377–1396 (SDDDSDDIDDSGDIDDSDDI) is disordered.

This sequence belongs to the Ycf2 family.

Its subcellular location is the plastid. It is found in the chloroplast stroma. Functionally, probable ATPase of unknown function. Its presence in a non-photosynthetic plant (Epifagus virginiana) and experiments in tobacco indicate that it has an essential function which is probably not related to photosynthesis. This chain is Protein Ycf2, found in Cucumis sativus (Cucumber).